We begin with the raw amino-acid sequence, 305 residues long: Superkiller complex protein 8 (305 aa).

N-acetylmethionine is present on M1. T2 carries the N-acetylthreonine; in WD repeat-containing protein 61, N-terminally processed modification. 7 WD repeats span residues A14 to Q57, G62 to S101, A104 to S143, T146 to E187, G188 to T227, G230 to T269, and D272 to I305.

The protein belongs to the SKI8 family. As to quaternary structure, component of the PAF1 complex, which consists of CDC73, PAF1, LEO1, CTR9, RTF1 and SKIC8. The PAF1 complex interacts with PHF5A. Within the PAF1 complex interacts directly with PHF5A. Component of the SKI complex which consists of SKIC2, SKIC3 and SKIC8.

The protein resides in the nucleus. It localises to the cytoplasm. Component of the PAF1 complex (PAF1C) which has multiple functions during transcription by RNA polymerase II and is implicated in regulation of development and maintenance of embryonic stem cell pluripotency. PAF1C associates with RNA polymerase II through interaction with POLR2A CTD non-phosphorylated and 'Ser-2'- and 'Ser-5'-phosphorylated forms and is involved in transcriptional elongation, acting both independently and synergistically with TCEA1 and in cooperation with the DSIF complex and HTATSF1. PAF1C is required for transcription of Hox and Wnt target genes. PAF1C is involved in hematopoiesis and stimulates transcriptional activity of KMT2A/MLL1; it promotes leukemogenesis through association with KMT2A/MLL1-rearranged oncoproteins, such as KMT2A/MLL1-MLLT3/AF9 and KMT2A/MLL1-MLLT1/ENL. PAF1C is involved in histone modifications such as ubiquitination of histone H2B and methylation on histone H3 'Lys-4' (H3K4me3). PAF1C recruits the RNF20/40 E3 ubiquitin-protein ligase complex and the E2 enzyme UBE2A or UBE2B to chromatin which mediate monoubiquitination of 'Lys-120' of histone H2B (H2BK120ub1); UB2A/B-mediated H2B ubiquitination is proposed to be coupled to transcription. PAF1C is involved in mRNA 3' end formation probably through association with cleavage and poly(A) factors. In case of infection by influenza A strain H3N2, PAF1C associates with viral NS1 protein, thereby regulating gene transcription. Required for mono- and trimethylation on histone H3 'Lys-4' (H3K4me3), dimethylation on histone H3 'Lys-79' (H3K4me3). Required for Hox gene transcription. Also acts as a component of the SKI complex, a multiprotein complex that assists the RNA-degrading exosome during the mRNA decay and quality-control pathways. The SKI complex catalyzes mRNA extraction from 80S ribosomal complexes in the 3'-5' direction and channels mRNA to the cytosolic exosome for degradation. SKI-mediated extraction of mRNA from stalled ribosomes allow binding of the Pelota-HBS1L complex and subsequent ribosome disassembly by ABCE1 for ribosome recycling. The sequence is that of Superkiller complex protein 8 (Skic8) from Rattus norvegicus (Rat).